The primary structure comprises 477 residues: ATP-dependent rRNA helicase RRP3 (477 aa).

The interval 1-22 (MSVKVDGMINKKSKTHSKKLDA) is disordered. A Q motif motif is present at residues 65–93 (KSFNELKLIPELLEAIQQMKFTKPTPIQS). Residues 96-267 (IPHALEGKDI…RASLHNPVRV (172 aa)) enclose the Helicase ATP-binding domain. Residue 109–116 (AQTGSGKT) coordinates ATP. Residues 215 to 218 (DEAD) carry the DEAD box motif. The 145-residue stretch at 294–438 (YLIHLLNEFL…KDPSPSKAVL (145 aa)) folds into the Helicase C-terminal domain. The segment at 452-477 (AIRQTKDFHEKRNPKKNRDDRDREER) is disordered.

Belongs to the DEAD box helicase family. DDX47/RRP3 subfamily. In terms of assembly, interacts with the SSU processome.

The protein localises to the nucleus. The catalysed reaction is ATP + H2O = ADP + phosphate + H(+). ATP-dependent rRNA helicase required for pre-ribosomal RNA processing. Involved in the maturation of the 35S-pre-rRNA and to its cleavage to mature 18S rRNA. The chain is ATP-dependent rRNA helicase RRP3 from Debaryomyces hansenii (strain ATCC 36239 / CBS 767 / BCRC 21394 / JCM 1990 / NBRC 0083 / IGC 2968) (Yeast).